Consider the following 246-residue polypeptide: UDP-N-acetyl-D-mannosaminuronic acid transferase (246 aa).

The protein belongs to the glycosyltransferase 26 family.

The enzyme catalyses UDP-N-acetyl-alpha-D-mannosaminouronate + N-acetyl-alpha-D-glucosaminyl-di-trans,octa-cis-undecaprenyl diphosphate = beta-D-ManNAcA-(1-&gt;4)-alpha-D-GlcNAc-di-trans,octa-cis-undecaprenyl diphosphate + UDP + H(+). The protein operates within bacterial outer membrane biogenesis; enterobacterial common antigen biosynthesis. Functionally, catalyzes the synthesis of Und-PP-GlcNAc-ManNAcA (Lipid II), the second lipid-linked intermediate involved in enterobacterial common antigen (ECA) synthesis. The chain is UDP-N-acetyl-D-mannosaminuronic acid transferase from Citrobacter koseri (strain ATCC BAA-895 / CDC 4225-83 / SGSC4696).